The sequence spans 326 residues: Diphthine methyltransferase (326 aa).

WD repeat units follow at residues 65 to 105 (MHCD…ELMF), 113 to 152 (DSSV…IKNK), 155 to 195 (EHDY…SCIW), and 293 to 326 (EHES…WEDI).

The protein belongs to the DPH7 family.

Its subcellular location is the cytoplasm. The protein localises to the nucleus. The catalysed reaction is diphthine methyl ester-[translation elongation factor 2] + H2O = diphthine-[translation elongation factor 2] + methanol + H(+). The protein operates within protein modification; peptidyl-diphthamide biosynthesis. In terms of biological role, catalyzes the demethylation of diphthine methyl ester to form diphthine, an intermediate in diphthamide biosynthesis, a post-translational modification of histidine which occurs in translation elongation factor 2 (eft201 and eft202). The polypeptide is Diphthine methyltransferase (rrt2) (Schizosaccharomyces pombe (strain 972 / ATCC 24843) (Fission yeast)).